A 334-amino-acid polypeptide reads, in one-letter code: MAFNLKNRHLLSLAHHSTEEIKFLVGLAADLKEAKYCGTEQPLLKGKNIALIFEKASTRTRCAFEVAAHDQGAHVTYLGPSGSHIGHKESMKDTARVLGRMYDGIEYRGFHQSVVEELAEYAGVPVFNGLTDEFHPTQMLADALTMREHAEKPFHEIKFAYVGDGRNNMGRSLLLLGAKLGMDVRIGAPEGLQPEAELVERCREWAEQSGGKVLVTASAEEAVRDVDFIHTDVWVSMGEPVESWSERVGTLLPFQINDALVKAAGNPRVKVMHCLPAFHNSETAVGAEVAKTYPELANGIEVTESVFESPACIAFDQAENRMHTIKAVLVSSLA.

Carbamoyl phosphate is bound by residues 57–60 (STRT), Arg-108, and 135–138 (HPTQ). Residues Asn-168, Asp-232, and 236–237 (SM) contribute to the L-ornithine site. Carbamoyl phosphate-binding positions include 274–275 (CL) and Arg-321.

This sequence belongs to the aspartate/ornithine carbamoyltransferase superfamily. OTCase family.

It localises to the cytoplasm. It carries out the reaction carbamoyl phosphate + L-ornithine = L-citrulline + phosphate + H(+). It participates in amino-acid biosynthesis; L-arginine biosynthesis; L-arginine from L-ornithine and carbamoyl phosphate: step 1/3. In terms of biological role, reversibly catalyzes the transfer of the carbamoyl group from carbamoyl phosphate (CP) to the N(epsilon) atom of ornithine (ORN) to produce L-citrulline. This Cutibacterium acnes (strain DSM 16379 / KPA171202) (Propionibacterium acnes) protein is Ornithine carbamoyltransferase.